The primary structure comprises 70 residues: DNA-directed RNA polymerase subunit omega (70 aa).

Belongs to the RNA polymerase subunit omega family. The RNAP catalytic core consists of 2 alpha, 1 beta, 1 beta' and 1 omega subunit. When a sigma factor is associated with the core the holoenzyme is formed, which can initiate transcription.

The catalysed reaction is RNA(n) + a ribonucleoside 5'-triphosphate = RNA(n+1) + diphosphate. In terms of biological role, promotes RNA polymerase assembly. Latches the N- and C-terminal regions of the beta' subunit thereby facilitating its interaction with the beta and alpha subunits. In Pelobacter propionicus (strain DSM 2379 / NBRC 103807 / OttBd1), this protein is DNA-directed RNA polymerase subunit omega.